The sequence spans 176 residues: NAD(P)H-quinone oxidoreductase subunit 6, chloroplastic (176 aa).

Transmembrane regions (helical) follow at residues 10 to 30, 32 to 52, 61 to 81, 92 to 112, and 152 to 172; these read ILLVFLGSGLILGGLGVVLFT, PIFSAFSLGLVLVCISLFHIL, AQLLIYVGAVNVLIIFAVMFM, LWTVGDGVTSLVCTSILFSLI, and FYLPFELISIILLVALIGAIA.

This sequence belongs to the complex I subunit 6 family. As to quaternary structure, NDH is composed of at least 16 different subunits, 5 of which are encoded in the nucleus.

Its subcellular location is the plastid. It localises to the chloroplast thylakoid membrane. It catalyses the reaction a plastoquinone + NADH + (n+1) H(+)(in) = a plastoquinol + NAD(+) + n H(+)(out). The catalysed reaction is a plastoquinone + NADPH + (n+1) H(+)(in) = a plastoquinol + NADP(+) + n H(+)(out). In terms of biological role, NDH shuttles electrons from NAD(P)H:plastoquinone, via FMN and iron-sulfur (Fe-S) centers, to quinones in the photosynthetic chain and possibly in a chloroplast respiratory chain. The immediate electron acceptor for the enzyme in this species is believed to be plastoquinone. Couples the redox reaction to proton translocation, and thus conserves the redox energy in a proton gradient. The polypeptide is NAD(P)H-quinone oxidoreductase subunit 6, chloroplastic (ndhG) (Drimys granadensis).